The following is a 166-amino-acid chain: Cytochrome b (166 aa).

The next 4 helical transmembrane spans lie at 15 to 35 (FKDIVGFIVMIFLLISLVLIN), 77 to 97 (LGGVIALVLSIAILMILPFYN), 109 to 129 (INQILFWIMLVTVILLTWIGA), and 136 to 156 (YVLLGQILTVIYFLYYLINPL).

This sequence belongs to the cytochrome b family. In terms of assembly, the main subunits of complex b-c1 are: cytochrome b, cytochrome c1 and the Rieske protein. The cofactor is heme.

The protein resides in the mitochondrion inner membrane. Component of the ubiquinol-cytochrome c reductase complex (complex III or cytochrome b-c1 complex) that is part of the mitochondrial respiratory chain. The b-c1 complex mediates electron transfer from ubiquinol to cytochrome c. Contributes to the generation of a proton gradient across the mitochondrial membrane that is then used for ATP synthesis. This is Cytochrome b (mt:Cyt-b) from Drosophila subobscura (Fruit fly).